We begin with the raw amino-acid sequence, 281 residues long: Acetyl-coenzyme A carboxylase carboxyl transferase subunit beta (281 aa).

A disordered region spans residues 1–23 (MAWFKREKKGISTSTEEKKEAPD). The 257-residue stretch at 25-281 (LWNKCPNCKK…LAAFLKMMKN (257 aa)) folds into the CoA carboxyltransferase N-terminal domain. Residues cysteine 29, cysteine 32, cysteine 48, and cysteine 51 each coordinate Zn(2+). The C4-type zinc-finger motif lies at 29 to 51 (CPNCKKALHSADLLENKYVCQYC).

This sequence belongs to the AccD/PCCB family. As to quaternary structure, acetyl-CoA carboxylase is a heterohexamer composed of biotin carboxyl carrier protein (AccB), biotin carboxylase (AccC) and two subunits each of ACCase subunit alpha (AccA) and ACCase subunit beta (AccD). Zn(2+) serves as cofactor.

It localises to the cytoplasm. The enzyme catalyses N(6)-carboxybiotinyl-L-lysyl-[protein] + acetyl-CoA = N(6)-biotinyl-L-lysyl-[protein] + malonyl-CoA. It functions in the pathway lipid metabolism; malonyl-CoA biosynthesis; malonyl-CoA from acetyl-CoA: step 1/1. Its function is as follows. Component of the acetyl coenzyme A carboxylase (ACC) complex. Biotin carboxylase (BC) catalyzes the carboxylation of biotin on its carrier protein (BCCP) and then the CO(2) group is transferred by the transcarboxylase to acetyl-CoA to form malonyl-CoA. The chain is Acetyl-coenzyme A carboxylase carboxyl transferase subunit beta from Pedobacter heparinus (strain ATCC 13125 / DSM 2366 / CIP 104194 / JCM 7457 / NBRC 12017 / NCIMB 9290 / NRRL B-14731 / HIM 762-3).